We begin with the raw amino-acid sequence, 505 residues long: Tyrosine-protein kinase FRK (505 aa).

Residues Ser-37 and Ser-40 each carry the phosphoserine modification. The 69-residue stretch at 42-110 (RHGHYFVALF…PSNYVAEDRS (69 aa)) folds into the SH3 domain. Positions 116–208 (WFFGAIGRSD…GLCVKLGKPC (93 aa)) constitute an SH2 domain. At Thr-178 the chain carries Phosphothreonine. Residues 234–491 (IQLLKRLGSG…TLRWKLEDYF (258 aa)) form the Protein kinase domain. ATP-binding positions include 240–248 (LGSGQFGEV) and Lys-262. Asp-354 functions as the Proton acceptor in the catalytic mechanism. Tyr-387 bears the Phosphotyrosine; by autocatalysis mark.

It belongs to the protein kinase superfamily. Tyr protein kinase family. SRC subfamily. As to quaternary structure, interacts (via the SH3-domain) with PTEN. Interacts with RB1. In terms of tissue distribution, predominantly expressed in epithelial derived cell lines and tissues, especially normal liver, kidney, breast and colon.

The protein resides in the cytoplasm. The protein localises to the nucleus. The catalysed reaction is L-tyrosyl-[protein] + ATP = O-phospho-L-tyrosyl-[protein] + ADP + H(+). In terms of biological role, non-receptor tyrosine-protein kinase that negatively regulates cell proliferation. Positively regulates PTEN protein stability through phosphorylation of PTEN on 'Tyr-336', which in turn prevents its ubiquitination and degradation, possibly by reducing its binding to NEDD4. May function as a tumor suppressor. The protein is Tyrosine-protein kinase FRK (FRK) of Homo sapiens (Human).